Here is a 374-residue protein sequence, read N- to C-terminus: MTSPALKDPAKTRVIVGMSGGVDSSVSALLLIEQGYQVEGLFMKNWEEDDGTEYCTAREDLADAQAVCDRIGIKLHTANFAAEYWDNVFEHFLEEYKAGRTPNPDILCNREIKFKAFLDYALSLGADLIATGHYVRRRDTGDLTELLKGLDPNKDQSYFLHAVGGKEIARTLFPVGELEKPEVRAIAEKHGLATAKKKDSTGICFIGERRFSDFLKQYLPAQPGDIETTEGEVIGRHHGLMYHTIGQRQGLGIGGLKDAGDEPWYVLHKDLTRNVLVVGQGNEHPWLFSRALLASEIFWVNPIDLSSPRQLTAKVRYRQSDQQCTLELTETGYRAVFDEPQRAVTPGQSVVFYDGEVCLGGGVIEAAEPWSPRA.

Residues 17-24 (GMSGGVDS) and Met43 each bind ATP. The segment at 103-105 (NPD) is interaction with target base in tRNA. The active-site Nucleophile is the Cys108. Cys108 and Cys204 are disulfide-bonded. An ATP-binding site is contributed by Gly132. Residues 154–156 (KDQ) are interaction with tRNA. The active-site Cysteine persulfide intermediate is Cys204. Residues 316 to 317 (RY) form an interaction with tRNA region.

The protein belongs to the MnmA/TRMU family.

It is found in the cytoplasm. It catalyses the reaction S-sulfanyl-L-cysteinyl-[protein] + uridine(34) in tRNA + AH2 + ATP = 2-thiouridine(34) in tRNA + L-cysteinyl-[protein] + A + AMP + diphosphate + H(+). Functionally, catalyzes the 2-thiolation of uridine at the wobble position (U34) of tRNA, leading to the formation of s(2)U34. The sequence is that of tRNA-specific 2-thiouridylase MnmA from Pseudomonas putida (strain GB-1).